The sequence spans 372 residues: DNA-directed RNA polymerase subunit alpha (372 aa).

Residues 1–268 form an alpha N-terminal domain (alpha-NTD) region; sequence MIFDEDSNSV…DQFQPFINFD (268 aa). The interval 280–372 is alpha C-terminal domain (alpha-CTD); it reads KDALPYDSNL…ESLSKQYSEE (93 aa).

Belongs to the RNA polymerase alpha chain family. Homodimer. The RNAP catalytic core consists of 2 alpha, 1 beta, 1 beta' and 1 omega subunit. When a sigma factor is associated with the core the holoenzyme is formed, which can initiate transcription.

The enzyme catalyses RNA(n) + a ribonucleoside 5'-triphosphate = RNA(n+1) + diphosphate. DNA-dependent RNA polymerase catalyzes the transcription of DNA into RNA using the four ribonucleoside triphosphates as substrates. In Ehrlichia canis (strain Jake), this protein is DNA-directed RNA polymerase subunit alpha.